The sequence spans 118 residues: Small ribosomal subunit protein uS13 (118 aa).

The segment at 91–118 is disordered; the sequence is HRRSLPVRGQRTKTNARTRKGPRKPIRK.

Belongs to the universal ribosomal protein uS13 family. As to quaternary structure, part of the 30S ribosomal subunit. Forms a loose heterodimer with protein S19. Forms two bridges to the 50S subunit in the 70S ribosome.

In terms of biological role, located at the top of the head of the 30S subunit, it contacts several helices of the 16S rRNA. In the 70S ribosome it contacts the 23S rRNA (bridge B1a) and protein L5 of the 50S subunit (bridge B1b), connecting the 2 subunits; these bridges are implicated in subunit movement. Contacts the tRNAs in the A and P-sites. The protein is Small ribosomal subunit protein uS13 of Marinomonas sp. (strain MWYL1).